Consider the following 282-residue polypeptide: ADP-ribosyl cyclase/cyclic ADP-ribose hydrolase (282 aa).

A signal peptide spans 1 to 24 (MSPVAIVACVCLAVTLTRISPSEA). 5 cysteine pairs are disulfide-bonded: Cys-39-Cys-58, Cys-75-Cys-155, Cys-136-Cys-149, Cys-230-Cys-251, and Cys-263-Cys-272.

Belongs to the ADP-ribosyl cyclase family. As to expression, ovotestis.

The protein localises to the cytoplasmic vesicle. The enzyme catalyses NAD(+) = cyclic ADP-beta-D-ribose + nicotinamide + H(+). It carries out the reaction NAD(+) + H2O = ADP-D-ribose + nicotinamide + H(+). The catalysed reaction is nicotinate + NADP(+) = nicotinate-adenine dinucleotide phosphate + nicotinamide. Activity is presumably regulated by its sequestration in vesicles before egg fertilization. After fertilization and upon NADase release, it could then be regulated via its potential phosphorylation sites. In terms of biological role, synthesizes cyclic ADP-ribose (cADPR), a second messenger for calcium mobilization from endoplasmic reticulum. Might make the Ca(2+) mobilizer nicotinate-adenine dinucleotide phosphate. Does not have cADPR hydrolase activity. This Aplysia kurodai (Kuroda's sea hare) protein is ADP-ribosyl cyclase/cyclic ADP-ribose hydrolase.